The primary structure comprises 416 residues: Alpha-1,3/1,6-mannosyltransferase ALG2 (416 aa).

Residues 1–84 (MAEEQGRERD…LPRGLGWGGR (84 aa)) lie on the Cytoplasmic side of the membrane. Residues 85 to 105 (GAAVCAYVRMVFLALYVLFLA) constitute an intramembrane region (helical). The Cytoplasmic segment spans residues 106–416 (DEEFDVVVCD…LYRYVTKLLV (311 aa)).

The protein belongs to the glycosyltransferase group 1 family. Glycosyltransferase 4 subfamily.

The protein resides in the endoplasmic reticulum membrane. The enzyme catalyses a beta-D-Man-(1-&gt;4)-beta-D-GlcNAc-(1-&gt;4)-alpha-D-GlcNAc-diphospho-di-trans,poly-cis-dolichol + GDP-alpha-D-mannose = an alpha-D-Man-(1-&gt;3)-beta-D-Man-(1-&gt;4)-beta-D-GlcNAc-(1-&gt;4)-alpha-D-GlcNAc-diphospho-di-trans,poly-cis-dolichol + GDP + H(+). The catalysed reaction is an alpha-D-Man-(1-&gt;3)-beta-D-Man-(1-&gt;4)-beta-D-GlcNAc-(1-&gt;4)-alpha-D-GlcNAc-diphospho-di-trans,poly-cis-dolichol + GDP-alpha-D-mannose = an alpha-D-Man-(1-&gt;3)-[alpha-D-Man-(1-&gt;6)]-beta-D-Man-(1-&gt;4)-beta-D-GlcNAc-(1-&gt;4)-alpha-D-GlcNAc-diphospho-di-trans,poly-cis-dolichol + GDP + H(+). It catalyses the reaction a beta-D-Man-(1-&gt;4)-beta-D-GlcNAc-(1-&gt;4)-alpha-D-GlcNAc-diphospho-di-trans,poly-cis-dolichol + GDP-alpha-D-mannose = an alpha-D-Man-(1-&gt;6)-beta-D-Man-(1-&gt;4)-beta-D-GlcNAc-(1-&gt;4)-alpha-D-GlcNAc-diphospho-di-trans,poly-cis-dolichol + GDP + H(+). It carries out the reaction an alpha-D-Man-(1-&gt;6)-beta-D-Man-(1-&gt;4)-beta-D-GlcNAc-(1-&gt;4)-alpha-D-GlcNAc-diphospho-di-trans,poly-cis-dolichol + GDP-alpha-D-mannose = an alpha-D-Man-(1-&gt;3)-[alpha-D-Man-(1-&gt;6)]-beta-D-Man-(1-&gt;4)-beta-D-GlcNAc-(1-&gt;4)-alpha-D-GlcNAc-diphospho-di-trans,poly-cis-dolichol + GDP + H(+). It functions in the pathway protein modification; protein glycosylation. Its function is as follows. Mannosyltransferase that operates in the biosynthetic pathway of dolichol-linked oligosaccharides, the glycan precursors employed in protein asparagine (N)-glycosylation. The assembly of dolichol-linked oligosaccharides begins on the cytosolic side of the endoplasmic reticulum membrane and finishes in its lumen. The sequential addition of sugars to dolichol pyrophosphate produces dolichol-linked oligosaccharides containing fourteen sugars, including two GlcNAcs, nine mannoses and three glucoses. Once assembled, the oligosaccharide is transferred from the lipid to nascent proteins by oligosaccharyltransferases. Catalyzes, on the cytoplasmic face of the endoplasmic reticulum, the addition of the second and third mannose residues to the dolichol-linked oligosaccharide chain, to produce Man3GlcNAc(2)-PP-dolichol core oligosaccharide. Man3GlcNAc(2)-PP-dolichol is a substrate for ALG11, the following enzyme in the biosynthetic pathway. While both alpha 1,3 and alpha 1,6 linkages are possible, the sequential addition of alpha 1,3 followed by alpha 1,6 is probably the preferred route. In Homo sapiens (Human), this protein is Alpha-1,3/1,6-mannosyltransferase ALG2 (ALG2).